The primary structure comprises 383 residues: Nuclear hormone receptor family member nhr-217 (383 aa).

A DNA-binding region (nuclear receptor) is located at residues 53–127 (IPACPVCDVP…AGLQRDYVRQ (75 aa)). 2 consecutive NR C4-type zinc fingers follow at residues 56–77 (CPVC…CAAC) and 93–109 (CKRE…CRAC). One can recognise an NR LBD domain in the interval 172 to 383 (ILKVSNSSLF…KLYVQIGIPF (212 aa)).

This sequence belongs to the nuclear hormone receptor family.

The protein resides in the nucleus. Orphan nuclear receptor. The polypeptide is Nuclear hormone receptor family member nhr-217 (nhr-217) (Caenorhabditis elegans).